A 467-amino-acid polypeptide reads, in one-letter code: Mothers against decapentaplegic homolog 9 (467 aa).

The 125-residue stretch at Pro16–Pro140 folds into the MH1 domain. Cys68, Cys113, Cys125, and His130 together coordinate Zn(2+). A disordered region spans residues Asn174–Asp246. Over residues Ser205 to Tyr220 the composition is skewed to low complexity. Residues Trp273–Ser467 form the MH2 domain.

Belongs to the dwarfin/SMAD family. Interaction with the co-SMAD SMAD4. Interacts with PEBP2-alpha subunit. Interacts with RANBP3L. Phosphorylated on serine by BMP (bone morphogenetic proteins) type 1 receptor kinase. Expressed in heart, brain, placenta, lung, skeletal muscle, prostate, testis, ovary and small intestine. Also expressed in fetal brain, lung and kidney.

It localises to the cytoplasm. It is found in the nucleus. Transcriptional modulator activated by BMP (bone morphogenetic proteins) type 1 receptor kinase. SMAD9 is a receptor-regulated SMAD (R-SMAD). This Homo sapiens (Human) protein is Mothers against decapentaplegic homolog 9 (SMAD9).